Consider the following 399-residue polypeptide: Glycerol-1-phosphate dehydrogenase [NAD(P)+] (399 aa).

Residues aspartate 56, 118 to 122 (GTIHD), and 140 to 143 (TAPS) contribute to the NAD(+) site. Aspartate 145 contacts substrate. Serine 149 lines the NAD(+) pocket. Residue aspartate 192 coordinates substrate. 2 residues coordinate Ni(2+): aspartate 192 and histidine 272. Histidine 276 contacts substrate. Histidine 292 contributes to the Ni(2+) binding site.

This sequence belongs to the glycerol-1-phosphate dehydrogenase family. Homodimer. Ni(2+) serves as cofactor.

The protein localises to the cytoplasm. It carries out the reaction sn-glycerol 1-phosphate + NAD(+) = dihydroxyacetone phosphate + NADH + H(+). It catalyses the reaction sn-glycerol 1-phosphate + NADP(+) = dihydroxyacetone phosphate + NADPH + H(+). Its function is as follows. Catalyzes the NAD(P)H-dependent reduction of dihydroxyacetonephosphate (DHAP or glycerone phosphate) to glycerol 1-phosphate (G1P). The G1P thus generated is probably used for the synthesis of phosphoglycerolipids in Gram-positive bacterial species. This is Glycerol-1-phosphate dehydrogenase [NAD(P)+] from Halalkalibacterium halodurans (strain ATCC BAA-125 / DSM 18197 / FERM 7344 / JCM 9153 / C-125) (Bacillus halodurans).